The following is a 158-amino-acid chain: Lipoprotein signal peptidase (158 aa).

Helical transmembrane passes span 7–27, 38–58, 67–87, and 95–115; these read LFWI…YWVV, ILPG…FSLF, WLSL…PVLD, and GLIL…GYVV. Residues Asp-116 and Asp-132 contribute to the active site. Residues 125-145 traverse the membrane as a helical segment; the sequence is FAVFNMADSFISIGIVCLLLA.

Belongs to the peptidase A8 family.

The protein localises to the cell inner membrane. The catalysed reaction is Release of signal peptides from bacterial membrane prolipoproteins. Hydrolyzes -Xaa-Yaa-Zaa-|-(S,diacylglyceryl)Cys-, in which Xaa is hydrophobic (preferably Leu), and Yaa (Ala or Ser) and Zaa (Gly or Ala) have small, neutral side chains.. Its pathway is protein modification; lipoprotein biosynthesis (signal peptide cleavage). In terms of biological role, this protein specifically catalyzes the removal of signal peptides from prolipoproteins. The protein is Lipoprotein signal peptidase of Nostoc sp. (strain PCC 7120 / SAG 25.82 / UTEX 2576).